The primary structure comprises 161 residues: Protein ZMO0507 (161 aa).

The protein belongs to the free Met sulfoxide reductase family.

The chain is Protein ZMO0507 from Zymomonas mobilis subsp. mobilis (strain ATCC 31821 / ZM4 / CP4).